The chain runs to 219 residues: Oxaloacetate tautomerase YcgM (219 aa).

The Mg(2+) site is built by Glu70, Glu72, and Asp101.

This sequence belongs to the FAH family. It depends on a divalent metal cation as a cofactor.

It catalyses the reaction oxaloacetate = enol-oxaloacetate. In terms of biological role, tautomerase that converts enol-oxaloacetate to the keto form of oxaloacetate. This chain is Oxaloacetate tautomerase YcgM, found in Escherichia coli (strain K12).